A 57-amino-acid chain; its full sequence is Small ribosomal subunit protein eS31 (57 aa).

Zn(2+)-binding residues include cysteine 29, cysteine 32, cysteine 47, and cysteine 50. The C4-type zinc finger occupies 29–50 (CSRCGKGTYMSEHKDRNTCGKC).

Belongs to the eukaryotic ribosomal protein eS31 family. In terms of assembly, part of the 30S ribosomal subunit. Requires Zn(2+) as cofactor.

The sequence is that of Small ribosomal subunit protein eS31 from Nitrosopumilus maritimus (strain SCM1).